The chain runs to 277 residues: Large ribosomal subunit protein uL2 (277 aa).

The interval 216 to 277 is disordered; it reads RRPHNRGVAM…IIRRRKVGKG (62 aa).

The protein belongs to the universal ribosomal protein uL2 family. Part of the 50S ribosomal subunit. Forms a bridge to the 30S subunit in the 70S ribosome.

In terms of biological role, one of the primary rRNA binding proteins. Required for association of the 30S and 50S subunits to form the 70S ribosome, for tRNA binding and peptide bond formation. It has been suggested to have peptidyltransferase activity; this is somewhat controversial. Makes several contacts with the 16S rRNA in the 70S ribosome. This is Large ribosomal subunit protein uL2 from Acidiphilium cryptum (strain JF-5).